The chain runs to 254 residues: Low affinity immunoglobulin gamma Fc region receptor III-A (254 aa).

The N-terminal stretch at 1–20 is a signal peptide; it reads MWQLLLPTALLLLVSAGMRA. Residues 21–206 are Extracellular-facing; the sequence is EDLPKAVVFL…SSISSFFPPG (186 aa). Ig-like C2-type domains follow at residues 24 to 105 and 107 to 189; these read PKAV…LEVH and GWLL…VNIT. Intrachain disulfides connect Cys47–Cys89 and Cys128–Cys172. Residue Asn187 is glycosylated (N-linked (GlcNAc...) asparagine). Residues 207-229 traverse the membrane as a helical segment; it reads YQVSFCLVMVLLFAVDTGLYFSV. The Cytoplasmic portion of the chain corresponds to 230 to 254; that stretch reads KKSVPSSTRDWEDHKFKWSKDPQDK.

Forms a heterooligomeric complex with ITAM-containing signaling subunits, either a homodimer of CD247, a homodimer of FCER1G or a heterodimer of CD247 and FCER1G, to form a functional receptor complex. Interacts (via transmembrane domain) with signaling subunits; this interaction is a prerequisite for receptor complex expression on the cell surface and intracellular signal transduction. Binds the Fc region of antigen-complexed IgG with a preference for IgG1 and IgG3 isotypes. Interacts with CD2; this interaction is involved in NK cell activation and cytotoxicity. Interacts with S100A4; this interaction inhibits PKC-dependent phosphorylation of FCGR3A. In terms of processing, glycosylated. Glycosylation plays an inhibitory role in the interaction with IgG1 and IgG2. Post-translationally, undergoes rapid ectodomain shedding upon NK cell stimulation. The soluble form is produced by a proteolytic cleavage mediated by ADAM17. Repeated stimulation causes receptor shedding, a mechanism that allows for increased NK cell motility and detachment from opsonized target cells while avoiding activation-induced NK cell apoptosis. Lymphocytes and monocytes.

The protein resides in the cell membrane. The protein localises to the secreted. In terms of biological role, receptor for the invariable Fc fragment of immunoglobulin gamma (IgG). Optimally activated upon binding of clustered antigen-IgG complexes displayed on cell surfaces, triggers lysis of antibody-coated cells, a process known as antibody-dependent cellular cytotoxicity (ADCC). Does not bind free monomeric IgG, thus avoiding inappropriate effector cell activation in the absence of antigenic trigger. Mediates IgG effector functions on natural killer (NK) cells. Binds antigen-IgG complexes generated upon infection and triggers NK cell-dependent cytokine production and degranulation to limit viral load and propagation. Involved in the generation of memory-like adaptive NK cells capable to produce high amounts of IFNG and to efficiently eliminate virus-infected cells via ADCC. Regulates NK cell survival and proliferation, in particular by preventing NK cell progenitor apoptosis. Fc-binding subunit that associates with CD247 and/or FCER1G adapters to form functional signaling complexes. Following the engagement of antigen-IgG complexes, triggers phosphorylation of immunoreceptor tyrosine-based activation motif (ITAM)-containing adapters with subsequent activation of phosphatidylinositol 3-kinase signaling and sustained elevation of intracellular calcium that ultimately drive NK cell activation. The ITAM-dependent signaling coupled to receptor phosphorylation by PKC mediates robust intracellular calcium flux that leads to production of pro-inflammatory cytokines, whereas in the absence of receptor phosphorylation it mainly activates phosphatidylinositol 3-kinase signaling leading to cell degranulation. Costimulates NK cells and trigger lysis of target cells independently of IgG binding. Mediates the antitumor activities of therapeutic antibodies. Upon ligation on monocytes triggers TNFA-dependent ADCC of IgG-coated tumor cells. Mediates enhanced ADCC in response to afucosylated IgGs. The sequence is that of Low affinity immunoglobulin gamma Fc region receptor III-A from Macaca mulatta (Rhesus macaque).